The primary structure comprises 343 residues: Small ribosomal subunit biogenesis GTPase RsgA (343 aa).

In terms of domain architecture, CP-type G spans 116-275 (RGQLKPVAAN…LIDSPGIREF (160 aa)). Residues 163–166 (NKAD) and 217–225 (GQSGVGKSS) each bind GTP. Cys299, Cys304, His306, and Cys312 together coordinate Zn(2+).

The protein belongs to the TRAFAC class YlqF/YawG GTPase family. RsgA subfamily. In terms of assembly, monomer. Associates with 30S ribosomal subunit, binds 16S rRNA. The cofactor is Zn(2+).

It is found in the cytoplasm. Its function is as follows. One of several proteins that assist in the late maturation steps of the functional core of the 30S ribosomal subunit. Helps release RbfA from mature subunits. May play a role in the assembly of ribosomal proteins into the subunit. Circularly permuted GTPase that catalyzes slow GTP hydrolysis, GTPase activity is stimulated by the 30S ribosomal subunit. This chain is Small ribosomal subunit biogenesis GTPase RsgA, found in Pseudomonas syringae pv. syringae (strain B728a).